Here is a 348-residue protein sequence, read N- to C-terminus: Probable tRNA pseudouridine synthase B (348 aa).

Residue D93 is the Nucleophile of the active site. Residues 260-335 (LKKIYILDSA…IAVDIERVFM (76 aa)) enclose the PUA domain.

Belongs to the pseudouridine synthase TruB family. Type 2 subfamily.

The enzyme catalyses uridine(55) in tRNA = pseudouridine(55) in tRNA. Its function is as follows. Could be responsible for synthesis of pseudouridine from uracil-55 in the psi GC loop of transfer RNAs. The chain is Probable tRNA pseudouridine synthase B from Nanoarchaeum equitans (strain Kin4-M).